We begin with the raw amino-acid sequence, 475 residues long: Terminase, large subunit (475 aa).

Positions 1–58 (MELDAILDNLSDEEQIELLELLEEEENYRNTHLLYEFTPYSKQREFIDAGHDYQSDVL) are interaction with the terminase small subunit. The tract at residues 1–282 (MELDAILDNL…EHEREARARG (282 aa)) is ATPase activity. The segment at 308 to 475 (DHFYVIDAQD…MRLRQDDARY (168 aa)) is nuclease activity. Residues aspartate 317 and aspartate 455 each coordinate Mg(2+).

It belongs to the Lederbergvirus large terminase family. As to quaternary structure, interacts with the terminase small subunit; the active complex is composed of dimer of terminase large subunits and a nonamer ring of terminase small subunits. Interacts with the portal protein; this interaction allows the packaging of viral DNA. Mg(2+) is required as a cofactor.

Functionally, the terminase large subunit acts as an ATP driven molecular motor necessary for viral DNA translocation into empty capsids and as an endonuclease that cuts the viral genome to initiate and to end a packaging reaction. The terminase lies at a unique vertex of the procapsid and is composed of two subunits, a small terminase subunit involved in viral DNA recognition (packaging 'pac' sequence), and a large terminase subunit possessing endonucleolytic and ATPase activities. Both terminase subunits heterooligomerize and are docked on the portal protein to form the packaging machine. The terminase large subunit exhibits endonuclease activity and cleaves the viral genome concatemer once the capsid is full (headful packaging). Once the capsid is packaged with the DNA, the terminase complex is substituted by the tail. This is Terminase, large subunit (2) from Salmonella (Bacteriophage LP7).